Reading from the N-terminus, the 550-residue chain is Formin-binding protein 1-like (550 aa).

The 263-residue stretch at 1-263 folds into the F-BAR domain; it reads MSWGTELWDQ…AAKSVDERRD (263 aa). Coiled coils occupy residues 66–258 and 334–426; these read FTSC…AKSV and LEDF…QRSE. An REM-1 domain is found at 339 to 416; that stretch reads HLPPEQRRKR…IHKNEAWLSE (78 aa). Positions 423–432 are enriched in basic and acidic residues; the sequence is QRSERRHSAE. Residues 423–467 are disordered; sequence QRSERRHSAEANHLVAQGRESPEGSYTEDANQEGRVQPQPHAHPE. In terms of domain architecture, SH3 spans 479–540; sequence PAIGHCKSLY…PTSYIDITLE (62 aa).

The protein belongs to the FNBP1 family. Homodimerizes, the dimers can polymerize end-to-end to form filamentous structures. Interacts with GTP-bound cdc42 and wasl/n-wasp.

Its subcellular location is the cytoplasm. The protein localises to the cytoskeleton. It is found in the cell cortex. The protein resides in the cytoplasmic vesicle. It localises to the cell membrane. Required to coordinate membrane tubulation with reorganization of the actin cytoskeleton during endocytosis. Promotes cdc42-induced actin polymerization by activating the wasl-waspip complex, the predominant form of wasl/n-wasp in cells. Essential for autophagy of intracellular bacterial pathogens. This is Formin-binding protein 1-like (fnbp1l) from Xenopus tropicalis (Western clawed frog).